We begin with the raw amino-acid sequence, 89 residues long: Small ribosomal subunit protein uS19 (89 aa).

Belongs to the universal ribosomal protein uS19 family.

In terms of biological role, protein S19 forms a complex with S13 that binds strongly to the 16S ribosomal RNA. This Rhodopirellula baltica (strain DSM 10527 / NCIMB 13988 / SH1) protein is Small ribosomal subunit protein uS19.